Here is a 349-residue protein sequence, read N- to C-terminus: Glycerol-3-phosphate dehydrogenase [NAD(+)], cytoplasmic (349 aa).

Residues 10-15, phenylalanine 41, and phenylalanine 97 each bind NAD(+); that span reads GSGNWG. Lysine 120 lines the substrate pocket. Alanine 153 contributes to the NAD(+) binding site. Residue serine 154 is modified to Phosphoserine. Lysine 204 functions as the Proton acceptor in the catalytic mechanism. Arginine 269 serves as a coordination point for NAD(+). Residue 269 to 270 participates in substrate binding; sequence RN. Position 289 is an N6-succinyllysine (lysine 289). NAD(+) is bound by residues lysine 296 and glutamine 298. Position 326 is a phosphotyrosine (tyrosine 326).

It belongs to the NAD-dependent glycerol-3-phosphate dehydrogenase family. Homodimer. Expressed in liver (at protein level).

Its subcellular location is the cytoplasm. It catalyses the reaction sn-glycerol 3-phosphate + NAD(+) = dihydroxyacetone phosphate + NADH + H(+). Inhibited by zinc ions and sulfate. Functionally, has glycerol-3-phosphate dehydrogenase activity. This Homo sapiens (Human) protein is Glycerol-3-phosphate dehydrogenase [NAD(+)], cytoplasmic.